The primary structure comprises 490 residues: Protein nucleotidyltransferase YdiU (490 aa).

The ATP site is built by Gly94, Gly96, Arg97, Lys117, Asp129, Gly130, Arg180, and Arg187. The Proton acceptor role is filled by Asp256. Mg(2+) is bound by residues Asn257 and Asp266. Asp266 serves as a coordination point for ATP.

The protein belongs to the SELO family. Requires Mg(2+) as cofactor. Mn(2+) serves as cofactor.

It carries out the reaction L-seryl-[protein] + ATP = 3-O-(5'-adenylyl)-L-seryl-[protein] + diphosphate. The catalysed reaction is L-threonyl-[protein] + ATP = 3-O-(5'-adenylyl)-L-threonyl-[protein] + diphosphate. It catalyses the reaction L-tyrosyl-[protein] + ATP = O-(5'-adenylyl)-L-tyrosyl-[protein] + diphosphate. The enzyme catalyses L-histidyl-[protein] + UTP = N(tele)-(5'-uridylyl)-L-histidyl-[protein] + diphosphate. It carries out the reaction L-seryl-[protein] + UTP = O-(5'-uridylyl)-L-seryl-[protein] + diphosphate. The catalysed reaction is L-tyrosyl-[protein] + UTP = O-(5'-uridylyl)-L-tyrosyl-[protein] + diphosphate. Functionally, nucleotidyltransferase involved in the post-translational modification of proteins. It can catalyze the addition of adenosine monophosphate (AMP) or uridine monophosphate (UMP) to a protein, resulting in modifications known as AMPylation and UMPylation. This chain is Protein nucleotidyltransferase YdiU, found in Clostridium perfringens (strain SM101 / Type A).